The chain runs to 125 residues: Sulfiredoxin, chloroplastic/mitochondrial (125 aa).

The N-terminal 22 residues, 1 to 22 (MANLMMRLPISLRSFSVSASSS), are a transit peptide targeting the chloroplast and mitochondrion.

It belongs to the sulfiredoxin family. As to expression, low expression in photosynthetic tissues such as leaves and sepals.

The protein localises to the plastid. It localises to the chloroplast. Its subcellular location is the mitochondrion. The catalysed reaction is S-hydroxy-S-oxy-L-cysteinyl-[peroxiredoxin] + [protein]-dithiol + ATP = S-hydroxy-L-cysteinyl-[peroxiredoxin] + [protein]-disulfide + ADP + phosphate. Its function is as follows. Contributes to oxidative stress resistance by reducing cysteine-sulfinic acid formed under exposure to oxidants in a peroxiredoxin. May catalyze the reduction in a multi-step process by acting both as a specific phosphotransferase and a thioltransferase. Required to switch on the antioxidant pathway to regenerate the oxidative damage. In mitochondrion, catalyzes the retroreduction of the inactive sulfinic form of atypical Prx IIF using thioredoxin as reducing agent. This Arabidopsis thaliana (Mouse-ear cress) protein is Sulfiredoxin, chloroplastic/mitochondrial (SRX).